A 511-amino-acid polypeptide reads, in one-letter code: Ribonuclease Y (511 aa).

A helical membrane pass occupies residues 3–23; that stretch reads VTIVASIACFIVGGILSYVLF. Positions 201-261 constitute a KH domain; it reads SVTVFHIESD…VRREIARLAL (61 aa). In terms of domain architecture, HD spans 327 to 420; that stretch reads LLQHARETAN…VQVCDAISGA (94 aa).

It belongs to the RNase Y family.

The protein localises to the cell membrane. In terms of biological role, endoribonuclease that initiates mRNA decay. This chain is Ribonuclease Y, found in Bacteroides fragilis (strain ATCC 25285 / DSM 2151 / CCUG 4856 / JCM 11019 / LMG 10263 / NCTC 9343 / Onslow / VPI 2553 / EN-2).